Reading from the N-terminus, the 1481-residue chain is Neuropathy target esterase sws (1481 aa).

Over 1-34 the chain is Lumenal; sequence MDVLELLRASANGCYNTIFSDAWSQYVSQQITSS. The helical transmembrane segment at 35–55 threads the bilayer; the sequence is LYLYIALGILTVLFVAWFIYF. Residues 56-1481 lie on the Cytoplasmic side of the membrane; sequence KRLARLRLRD…KENKNVNTKN (1426 aa). Residue 175–302 coordinates a nucleoside 3',5'-cyclic phosphate; sequence IFGHFEKPVF…IRVIQVIMIR (128 aa). Positions 336 to 420 are disordered; it reads HLNSQSQSSQ…NNVQLPEVHG (85 aa). Composition is skewed to low complexity over residues 339–379 and 401–412; these read SQSQ…LPLQ and SGPNPNPNSGNN. S448 bears the Phosphoserine mark. Residues 492–624 and 613–740 each bind a nucleoside 3',5'-cyclic phosphate; these read ELGL…VVRR and IVLD…LSHR. Residues 967-1133 enclose the PNPLA domain; it reads LVLGGGGARG…VNNLPGHLWR (167 aa). A GXGXXG motif is present at residues 971–976; sequence GGGARG. Positions 998-1002 match the GXSXG motif; sequence GVSIG. S1000 (nucleophile) is an active-site residue. The Proton acceptor role is filled by D1120. The DGA/G motif lies at 1120-1122; it reads DGG. A Phosphoserine modification is found at S1214. Residues 1366–1481 form a disordered region; the sequence is LSLSEAEMDS…KENKNVNTKN (116 aa). Basic and acidic residues-rich tracts occupy residues 1379–1390 and 1400–1410; these read IDFRSDSKKDKA and KDNEDKTDAVD. The segment covering 1445-1457 has biased composition (low complexity); it reads TNTMTTQTTSPTT.

It belongs to the NTE family. As to quaternary structure, interacts with Pka-C3; interaction inhibits the catalytic function of Pka-C3 and the esterase activity of sws.

Its subcellular location is the endoplasmic reticulum membrane. It carries out the reaction a 1-acyl-sn-glycero-3-phosphocholine + H2O = sn-glycerol 3-phosphocholine + a fatty acid + H(+). In terms of biological role, phospholipase B that deacylates intracellular phosphatidylcholine (PtdCho), generating glycerophosphocholine (GroPtdCho). This deacylation occurs at both sn-2 and sn-1 positions of PtdCho. Its specific chemical modification by certain organophosphorus (OP) compounds leads to distal axonopathy. Plays a role in the signaling mechanism between neurons and glia that regulates glia wrapping during development of the adult brain. Essential for membrane lipid homeostasis and cell survival in both neurons and glia of the adult brain. This Drosophila willistoni (Fruit fly) protein is Neuropathy target esterase sws.